The following is a 240-amino-acid chain: Large ribosomal subunit protein bL25 (240 aa).

Disordered regions lie at residues 1–23 and 207–240; these read MATV…ARAE and PAAA…AKKK.

This sequence belongs to the bacterial ribosomal protein bL25 family. CTC subfamily. As to quaternary structure, part of the 50S ribosomal subunit; part of the 5S rRNA/L5/L18/L25 subcomplex. Contacts the 5S rRNA. Binds to the 5S rRNA independently of L5 and L18.

Its function is as follows. This is one of the proteins that binds to the 5S RNA in the ribosome where it forms part of the central protuberance. This Rhodopseudomonas palustris (strain BisB18) protein is Large ribosomal subunit protein bL25.